Reading from the N-terminus, the 61-residue chain is Double gene block protein 1 (61 aa).

The segment at M1–N45 is disordered. Residues G17–K35 form an RNA-binding region. Positions V28–A37 are enriched in basic and acidic residues.

The protein belongs to the carmovirus double gene block protein 1 family. Homodimer.

Cell-to-cell movement. Displays RNA-binding activity. The polypeptide is Double gene block protein 1 (Carnation mottle virus (CarMV)).